The sequence spans 526 residues: Estrogen receptor beta (526 aa).

The tract at residues 1 to 145 (MDIKNSPSNL…SPSSKRDAHF (145 aa)) is modulating. 2 positions are modified to phosphoserine; by MAPK: Ser-84 and Ser-102. 2 consecutive NR C4-type zinc fingers follow at residues 146-166 (CAVC…CEGC) and 182-206 (CPAT…LRKC). The segment at residues 146–211 (CAVCSDYASG…RLRKCYEVGM (66 aa)) is a DNA-binding region (nuclear receptor). Residues 261-494 (SPEQLVLTLL…DLLLEMLNAH (234 aa)) enclose the NR LBD domain. The tract at residues 502–526 (LVTGSERSRMEESESKEGSQKPQAQ) is disordered. Residues 507 to 520 (ERSRMEESESKEGS) show a composition bias toward basic and acidic residues.

Belongs to the nuclear hormone receptor family. NR3 subfamily. In terms of assembly, binds DNA as a homodimer. Can form a heterodimer with ESR1. Interacts with NCOA1, NCOA3, NCOA5 and NCOA6 coactivators, leading to a strong increase of transcription of target genes. Interacts with UBE1C and AKAP13. Interacts with DNTTIP2. Interacts with CCDC62 in the presence of estradiol/E2; this interaction seems to enhance the transcription of target genes. Interacts with DNAAF4. Interacts with PRMT2. Interacts with CCAR2 (via N-terminus) in a ligand-independent manner. Interacts with RBM39, in the presence of estradiol (E2). Interacts with STUB1/CHIP. In terms of processing, phosphorylation at Ser-84 and Ser-102 recruits NCOA1.

The protein localises to the nucleus. Its function is as follows. Nuclear hormone receptor. Binds estrogens with an affinity similar to that of ESR1/ER-alpha, and activates expression of reporter genes containing estrogen response elements (ERE) in an estrogen-dependent manner. The chain is Estrogen receptor beta (ESR2) from Sus scrofa (Pig).